A 274-amino-acid polypeptide reads, in one-letter code: Thiamine kinase (274 aa).

The protein belongs to the thiamine kinase family.

The enzyme catalyses thiamine + ATP = thiamine phosphate + ADP + H(+). Its pathway is cofactor biosynthesis; thiamine diphosphate biosynthesis; thiamine phosphate from thiamine: step 1/1. Functionally, catalyzes the ATP-dependent phosphorylation of thiamine to thiamine phosphate. Is involved in thiamine salvage. The chain is Thiamine kinase from Shigella flexneri serotype 5b (strain 8401).